A 70-amino-acid chain; its full sequence is Large ribosomal subunit protein bL31 (70 aa).

Zn(2+) contacts are provided by C16, C18, C37, and C40.

It belongs to the bacterial ribosomal protein bL31 family. Type A subfamily. As to quaternary structure, part of the 50S ribosomal subunit. It depends on Zn(2+) as a cofactor.

Its function is as follows. Binds the 23S rRNA. The protein is Large ribosomal subunit protein bL31 of Saccharophagus degradans (strain 2-40 / ATCC 43961 / DSM 17024).